The sequence spans 208 residues: Methylthioribulose-1-phosphate dehydratase (208 aa).

Zn(2+)-binding residues include H98 and H100.

This sequence belongs to the aldolase class II family. MtnB subfamily. Zn(2+) is required as a cofactor.

The enzyme catalyses 5-(methylsulfanyl)-D-ribulose 1-phosphate = 5-methylsulfanyl-2,3-dioxopentyl phosphate + H2O. Its pathway is amino-acid biosynthesis; L-methionine biosynthesis via salvage pathway; L-methionine from S-methyl-5-thio-alpha-D-ribose 1-phosphate: step 2/6. In terms of biological role, catalyzes the dehydration of methylthioribulose-1-phosphate (MTRu-1-P) into 2,3-diketo-5-methylthiopentyl-1-phosphate (DK-MTP-1-P). The sequence is that of Methylthioribulose-1-phosphate dehydratase from Marinobacter nauticus (strain ATCC 700491 / DSM 11845 / VT8) (Marinobacter aquaeolei).